A 250-amino-acid chain; its full sequence is Aliphatic sulfonates import ATP-binding protein SsuB 2 (250 aa).

In terms of domain architecture, ABC transporter spans 13–229 (VRLQGLTRSF…SYRDPLLGEY (217 aa)). 45 to 52 (GHSGSGKS) contributes to the ATP binding site.

Belongs to the ABC transporter superfamily. Aliphatic sulfonates importer (TC 3.A.1.17.2) family. As to quaternary structure, the complex is composed of two ATP-binding proteins (SsuB), two transmembrane proteins (SsuC) and a solute-binding protein (SsuA).

The protein localises to the cell membrane. It catalyses the reaction ATP + H2O + aliphatic sulfonate-[sulfonate-binding protein]Side 1 = ADP + phosphate + aliphatic sulfonateSide 2 + [sulfonate-binding protein]Side 1.. Part of the ABC transporter complex SsuABC involved in aliphatic sulfonates import. Responsible for energy coupling to the transport system. The protein is Aliphatic sulfonates import ATP-binding protein SsuB 2 of Streptomyces avermitilis (strain ATCC 31267 / DSM 46492 / JCM 5070 / NBRC 14893 / NCIMB 12804 / NRRL 8165 / MA-4680).